Here is a 293-residue protein sequence, read N- to C-terminus: Pyridoxal 5'-phosphate synthase subunit PdxS (293 aa).

Residue D23 participates in D-ribose 5-phosphate binding. Residue K80 is the Schiff-base intermediate with D-ribose 5-phosphate of the active site. Position 152 (G152) interacts with D-ribose 5-phosphate. Residue R164 coordinates D-glyceraldehyde 3-phosphate. D-ribose 5-phosphate is bound by residues G213 and 234–235 (GS).

Belongs to the PdxS/SNZ family. In the presence of PdxT, forms a dodecamer of heterodimers.

It carries out the reaction aldehydo-D-ribose 5-phosphate + D-glyceraldehyde 3-phosphate + L-glutamine = pyridoxal 5'-phosphate + L-glutamate + phosphate + 3 H2O + H(+). Its pathway is cofactor biosynthesis; pyridoxal 5'-phosphate biosynthesis. In terms of biological role, catalyzes the formation of pyridoxal 5'-phosphate from ribose 5-phosphate (RBP), glyceraldehyde 3-phosphate (G3P) and ammonia. The ammonia is provided by the PdxT subunit. Can also use ribulose 5-phosphate and dihydroxyacetone phosphate as substrates, resulting from enzyme-catalyzed isomerization of RBP and G3P, respectively. The chain is Pyridoxal 5'-phosphate synthase subunit PdxS from Niallia circulans (Bacillus circulans).